A 38-amino-acid polypeptide reads, in one-letter code: NAD-reducing hydrogenase HoxS subunit beta (38 aa).

Belongs to the [NiFe]/[NiFeSe] hydrogenase large subunit family. In terms of assembly, tetramer of an alpha and a gamma subunits (flavin-containing dimer), and a delta and a nickel-containing beta subunits (hydrogenase dimer). FMN serves as cofactor. Ni(2+) is required as a cofactor.

The protein resides in the cytoplasm. The catalysed reaction is H2 + NAD(+) = NADH + H(+). The sequence is that of NAD-reducing hydrogenase HoxS subunit beta (hoxH) from Rhodococcus opacus (Nocardia opaca).